Reading from the N-terminus, the 76-residue chain is Acyl carrier protein (76 aa).

The 76-residue stretch at 1–76 folds into the Carrier domain; sequence MAIFDDIKEV…DVVRYIETNK (76 aa). The residue at position 36 (Ser36) is an O-(pantetheine 4'-phosphoryl)serine.

This sequence belongs to the acyl carrier protein (ACP) family. Post-translationally, 4'-phosphopantetheine is transferred from CoA to a specific serine of apo-ACP by AcpS. This modification is essential for activity because fatty acids are bound in thioester linkage to the sulfhydryl of the prosthetic group.

It localises to the cytoplasm. It functions in the pathway lipid metabolism; fatty acid biosynthesis. Its function is as follows. Carrier of the growing fatty acid chain in fatty acid biosynthesis. In Wolinella succinogenes (strain ATCC 29543 / DSM 1740 / CCUG 13145 / JCM 31913 / LMG 7466 / NCTC 11488 / FDC 602W) (Vibrio succinogenes), this protein is Acyl carrier protein.